The following is a 278-amino-acid chain: Achaete-scute homolog 5 (278 aa).

A disordered region spans residues 1 to 66 (MPMGAAERGA…GPFGGGLALG (66 aa)). The 53-residue stretch at 155-207 (AFIQKRNERERQRVKCVNEGYARLRGHLPGALAEKRLSKVETLRAAIRYIKYL) folds into the bHLH domain. The interval 214 to 278 (APDGSTPPAS…PFLESEESWH (65 aa)) is disordered. Residues 230-239 (GPCPAPPATP) show a composition bias toward pro residues. Over residues 240–249 (RPDRPGDGEA) the composition is skewed to basic and acidic residues. Low complexity predominate over residues 252-271 (PSSLVPESSESSCFSPSPFL).

Interacts with transcription factor TCF3/E12.

It is found in the nucleus. Transcription factor. Probably binds E-box motifs 5'-CANNTG-3' in complex with transcription factor TCF3/E12. Negatively modulates transcription of target genes such as CDH1/E-cadherin, perhaps by recruiting the PRC2 repressive complex to regulatory elements. Regulates ameloblast development and tooth germ growth, perhaps acting by positively modulating migration of inner enamel epithelium (IEE) cells. Plays a role in enamel formation. In Homo sapiens (Human), this protein is Achaete-scute homolog 5 (ASCL5).